The chain runs to 96 residues: Small ribosomal subunit protein bS20 (96 aa).

The protein belongs to the bacterial ribosomal protein bS20 family.

In terms of biological role, binds directly to 16S ribosomal RNA. In Anaplasma phagocytophilum (strain HZ), this protein is Small ribosomal subunit protein bS20.